A 553-amino-acid chain; its full sequence is Membrane protein insertase YidC (553 aa).

The chain crosses the membrane as a helical span at residues 3 to 23; it reads IKRTILWVIFSLSVVLLFDNW. The disordered stretch occupies residues 44–64; that stretch reads AAAPGGTPAGDVPKAAAPAAA. 4 consecutive transmembrane segments (helical) span residues 359 to 379, 429 to 449, 467 to 487, and 507 to 527; these read LLGN…LVFF, LGGC…YWVL, LASP…MFVQ, and PIAF…YWVV.

Belongs to the OXA1/ALB3/YidC family. Type 1 subfamily. In terms of assembly, interacts with the Sec translocase complex via SecD. Specifically interacts with transmembrane segments of nascent integral membrane proteins during membrane integration.

It localises to the cell inner membrane. Its function is as follows. Required for the insertion and/or proper folding and/or complex formation of integral membrane proteins into the membrane. Involved in integration of membrane proteins that insert both dependently and independently of the Sec translocase complex, as well as at least some lipoproteins. Aids folding of multispanning membrane proteins. In Ralstonia nicotianae (strain ATCC BAA-1114 / GMI1000) (Ralstonia solanacearum), this protein is Membrane protein insertase YidC.